Reading from the N-terminus, the 310-residue chain is Nucleotide-binding protein Ddes_0972 (310 aa).

30–37 (GLSGAGKS) serves as a coordination point for ATP. 82-85 (DLRQ) lines the GTP pocket.

The protein belongs to the RapZ-like family.

Its function is as follows. Displays ATPase and GTPase activities. This is Nucleotide-binding protein Ddes_0972 from Desulfovibrio desulfuricans (strain ATCC 27774 / DSM 6949 / MB).